The sequence spans 146 residues: Hemoglobin subunit beta (146 aa).

Valine 1 bears the N-acetylvaline mark. The 145-residue stretch at 2–146 (HLTPEEKSAV…VANALAHKYH (145 aa)) folds into the Globin domain. A Phosphothreonine modification is found at threonine 12. Residue serine 44 is modified to Phosphoserine. The residue at position 59 (lysine 59) is an N6-acetyllysine. Histidine 63 contributes to the heme b binding site. Lysine 82 carries the post-translational modification N6-acetyllysine. Histidine 92 is a heme b binding site. Cysteine 93 bears the S-nitrosocysteine mark. Lysine 144 carries the post-translational modification N6-acetyllysine.

This sequence belongs to the globin family. In terms of assembly, heterotetramer of two alpha chains and two beta chains. As to expression, red blood cells.

In terms of biological role, involved in oxygen transport from the lung to the various peripheral tissues. This is Hemoglobin subunit beta (HBB) from Hylobates lar (Lar gibbon).